The primary structure comprises 504 residues: ATP synthase subunit alpha (504 aa).

169–176 contributes to the ATP binding site; the sequence is GDRQTGKT.

Belongs to the ATPase alpha/beta chains family. In terms of assembly, F-type ATPases have 2 components, CF(1) - the catalytic core - and CF(0) - the membrane proton channel. CF(1) has five subunits: alpha(3), beta(3), gamma(1), delta(1), epsilon(1). CF(0) has three main subunits: a(1), b(2) and c(9-12). The alpha and beta chains form an alternating ring which encloses part of the gamma chain. CF(1) is attached to CF(0) by a central stalk formed by the gamma and epsilon chains, while a peripheral stalk is formed by the delta and b chains.

It localises to the cell membrane. The catalysed reaction is ATP + H2O + 4 H(+)(in) = ADP + phosphate + 5 H(+)(out). Its function is as follows. Produces ATP from ADP in the presence of a proton gradient across the membrane. The alpha chain is a regulatory subunit. The protein is ATP synthase subunit alpha of Clostridium kluyveri (strain ATCC 8527 / DSM 555 / NBRC 12016 / NCIMB 10680 / K1).